A 116-amino-acid polypeptide reads, in one-letter code: Large ribosomal subunit protein bL19 (116 aa).

Belongs to the bacterial ribosomal protein bL19 family.

Its function is as follows. This protein is located at the 30S-50S ribosomal subunit interface and may play a role in the structure and function of the aminoacyl-tRNA binding site. This chain is Large ribosomal subunit protein bL19, found in Staphylococcus aureus (strain USA300).